Reading from the N-terminus, the 101-residue chain is MSIYVGNLSYDVSEADLTAVFAEYGSVKRVQLPTDRETGRMRGFGFVELEADAEETAAIEALDGAEWMGRDLKVNKAKPRENRSGGGSFGGGRKSYGGSRY.

Residues serine 2–proline 79 form the RRM domain. Residues lysine 73–arginine 83 show a composition bias toward basic and acidic residues. The interval lysine 73–tyrosine 101 is disordered. Positions serine 84 to tyrosine 101 are enriched in gly residues.

This chain is Putative RNA-binding protein RbpA (rbpA), found in Synechocystis sp. (strain ATCC 27184 / PCC 6803 / Kazusa).